The chain runs to 369 residues: Methionine aminopeptidase 1B, chloroplastic (369 aa).

A chloroplast-targeting transit peptide spans 1 to 61; sequence MASSVFLSSF…YSPRQFHVSA (61 aa). Residue H199 coordinates substrate. The a divalent metal cation site is built by D216, D227, and H290. Substrate is bound at residue H297. The a divalent metal cation site is built by E322 and E353.

The protein belongs to the peptidase M24A family. Methionine aminopeptidase type 1 subfamily. Co(2+) is required as a cofactor. The cofactor is Zn(2+). Mn(2+) serves as cofactor. It depends on Fe(2+) as a cofactor. As to expression, ubiquitous. Preferentially expressed in green tissues.

Its subcellular location is the plastid. It localises to the chloroplast. The catalysed reaction is Release of N-terminal amino acids, preferentially methionine, from peptides and arylamides.. Removes the N-terminal methionine from nascent proteins. The N-terminal methionine is often cleaved when the second residue in the primary sequence is small and uncharged (Met-Ala-, Cys, Gly, Pro, Ser, Thr, or Val). The protein is Methionine aminopeptidase 1B, chloroplastic (MAP1B) of Arabidopsis thaliana (Mouse-ear cress).